A 119-amino-acid polypeptide reads, in one-letter code: Small ribosomal subunit protein uS13 (119 aa).

A disordered region spans residues 94–119; sequence GLPVRGQRTQTNARTRKGPRRGPAGK.

The protein belongs to the universal ribosomal protein uS13 family. As to quaternary structure, part of the 30S ribosomal subunit. Forms a loose heterodimer with protein S19. Forms two bridges to the 50S subunit in the 70S ribosome.

Its function is as follows. Located at the top of the head of the 30S subunit, it contacts several helices of the 16S rRNA. In the 70S ribosome it contacts the 23S rRNA (bridge B1a) and protein L5 of the 50S subunit (bridge B1b), connecting the 2 subunits; these bridges are implicated in subunit movement. Contacts the tRNAs in the A and P-sites. This is Small ribosomal subunit protein uS13 from Alkalilimnicola ehrlichii (strain ATCC BAA-1101 / DSM 17681 / MLHE-1).